Reading from the N-terminus, the 142-residue chain is Hemoglobin subunit alpha (142 aa).

The Globin domain occupies 2-142; sequence VLSPADKTNV…VSTVLTSKYR (141 aa). Ser4 carries the post-translational modification Phosphoserine. Residue Lys8 is modified to N6-succinyllysine. The residue at position 9 (Thr9) is a Phosphothreonine. An N6-succinyllysine modification is found at Lys12. The residue at position 17 (Lys17) is an N6-acetyllysine; alternate. At Lys17 the chain carries N6-succinyllysine; alternate. A Phosphotyrosine modification is found at Tyr25. A Phosphoserine modification is found at Ser36. Lys41 carries the N6-succinyllysine modification. Residue Ser50 is modified to Phosphoserine. His59 contributes to the O2 binding site. His88 provides a ligand contact to heme b. Ser103 carries the post-translational modification Phosphoserine. Residue Thr109 is modified to Phosphothreonine. 2 positions are modified to phosphoserine: Ser125 and Ser132. Thr135 and Thr138 each carry phosphothreonine. Ser139 is modified (phosphoserine).

It belongs to the globin family. In terms of assembly, heterotetramer of two alpha chains and two beta chains. Red blood cells.

Its function is as follows. Involved in oxygen transport from the lung to the various peripheral tissues. Functionally, hemopressin acts as an antagonist peptide of the cannabinoid receptor CNR1. Hemopressin-binding efficiently blocks cannabinoid receptor CNR1 and subsequent signaling. The chain is Hemoglobin subunit alpha (HBA) from Piliocolobus badius (Western red colobus).